The sequence spans 394 residues: Potassium channel subfamily K member 18 (394 aa).

The Cytoplasmic segment spans residues 1–31 (MEAEEPPEARRCCPEALGKARGCCPEALGKL). A helical transmembrane segment spans residues 32-52 (LPGLCFLCCLVTYALVGAALF). The N-linked (GlcNAc...) asparagine glycan is linked to Asn83. The segment at residues 114 to 140 (FLSALFFCCTVFSTVGYGHMYPVTRLG) is an intramembrane region (pore-forming). K(+) contacts are provided by Thr127, Val128, Gly129, and Tyr130. The tract at residues 127 to 132 (TVGYGH) is selectivity filter 1. The chain crosses the membrane as a helical span at residues 142–162 (FLCMLYALFGIPLMFLVLTDI). The Cytoplasmic segment spans residues 163 to 292 (GDILATILSR…EVGQQVERLD (130 aa)). The interaction with calcineurin stretch occupies residues 210–215 (PQIVID). The interval 261–266 (RSNSCP) is interaction with YWHAH. A phosphoserine mark is found at Ser264 and Ser276. A helical transmembrane segment spans residues 293-313 (IPLPVIALVVFAYISCAAAIL). An intramembrane region (pore-forming) is located at residues 326 to 340 (FYFCFVTLTTIGFGD). The segment at 335-340 (TIGFGD) is selectivity filter 2. The helical transmembrane segment at 347-367 (HFFLFFSIYIIVGMEILFIAF) threads the bilayer. Residues 368–394 (KLMQNRLLHTYKTLMLFVCQREVSLPW) are Cytoplasmic-facing.

Belongs to the two pore domain potassium channel (TC 1.A.1.8) family. As to quaternary structure, homodimer. Heterodimer with KCNK2. Heterodimer with KCNK10. Interacts with calcineurin. Interacts with YWHAH, in a phosphorylation-dependent manner. Phosphorylation of Ser-264 is required for the binding of 14-3-3eta/YWHAH. Calcineurin-mediated dephosphorylation of Ser-276 enhances channel activity. Post-translationally, N-glycosylated. Detected in brain cortex, cerebellum, dorsal root ganglion, spinal cord and testis. High expression in trigeminal ganglion (at protein level), also expressed in autonomic nervous system ganglia such as the stellate ganglion and paravertebral sympathetic ganglia. Expressed in all adult spinal cord and brain regions, with slightly higher expression in thalamus, hypothalamus, hippocampus and posterior corte (at protein level). In non-neuronal tissues, substantial expression found in lung and heart and weal expression in liver, testis, kidney, small intestine and spleen. Expressed in regulatory T cells (at protein level).

The protein resides in the cell membrane. It catalyses the reaction K(+)(in) = K(+)(out). Its activity is regulated as follows. Activated upon cell stimulation via Ca(2+)-mobilizing receptors, such as CHRM1/M1 muscarinic receptor and AGTR1/AT1a angiotensin receptor. Activated by volatile anesthetics, such as isoflurane and inhibited by local anesthetics such as bupivacaine and lidocaine. Inhibited by extracellular acidic pH. Inhibited by Zn(2+) ions. Inhibited by hydroxy-alpha-sanshool, an ingredient of Schezuan pepper. Inhibited by Ba(2+) ions. In terms of biological role, k(+) channel that conducts outward and inward rectifying currents at depolarized and hyperpolarized membrane potentials, respectively. The outward rectifying currents are voltage-dependent, coupled to K(+) electrochemical gradient across the membrane, whereas the inward currents can be induced in response to activation of Ca(2+)-mobilizing receptors. Homo- and heterodimerizes to form functional channels with distinct regulatory and gating properties. In trigeminal ganglia sensory neurons, the heterodimers of KCNK18/TRESK and KCNK2/TREK-1 or KCNK10/TREK-2 inhibit neuronal firing and neurogenic inflammation by stabilizing the resting membrane potential at K(+) equilibrium potential as well as by regulating the threshold of action potentials and the spike frequency. In thymocytes, conducts K(+) currents upon T cell receptor (TCR) signaling leading to sustained Ca(2+) influx and NF-kappa-B activation, FOXP3 transcription and positive selection of regulatory T cell (Treg) progenitor subsets. Appears to mediate the analgesics effects of hydroxy-alpha-sanshool, a metabolite naturally present in Schezuan pepper and other Xanthoxylum plants. The polypeptide is Potassium channel subfamily K member 18 (Mus musculus (Mouse)).